A 275-amino-acid chain; its full sequence is Envelope glycoprotein (275 aa).

Disulfide bonds link Cys1-Cys10, Cys18-Cys27, and Cys58-Cys62. N-linked (GlcNAc...) asparagine; by host glycosylation is present at Asn122. Disulfide bonds link Cys164/Cys194, Cys187/Cys239, Cys204/Cys209, and Cys240/Cys245.

Belongs to the hantavirus envelope glycoprotein family. Homodimer. Homotetramer; forms heterotetrameric Gn-Gc spikes in the pre-fusion conformation. Homotrimer; forms homotrimer in the post-fusion conformation at acidic pH. Interacts (via C-terminus) with the nucleoprotein. Envelope polyprotein precursor is quickly cleaved in vivo just after synthesis, presumably by host signal peptidase.

The protein localises to the virion membrane. It localises to the host cell surface. Its subcellular location is the host Golgi apparatus membrane. The protein resides in the host endoplasmic reticulum membrane. In terms of biological role, forms homotetramers with glycoprotein N at the surface of the virion. Attaches the virion to host cell receptors including integrin ITGAV/ITGB3. This attachment induces virion internalization predominantly through clathrin-dependent endocytosis. Class II fusion protein that promotes fusion of viral membrane with host endosomal membrane after endocytosis of the virion. This chain is Envelope glycoprotein (GP), found in Homo sapiens (Human).